The primary structure comprises 403 residues: Argininosuccinate synthase (403 aa).

Position 9-17 (9-17 (AYSGGLDTS)) interacts with ATP. L-citrulline is bound at residue Tyr86. Gly116 contributes to the ATP binding site. L-aspartate-binding residues include Thr118, Asn122, and Asp123. L-citrulline is bound at residue Asn122. L-citrulline contacts are provided by Arg126, Ser174, Glu259, and Tyr271.

This sequence belongs to the argininosuccinate synthase family. Type 1 subfamily. Homotetramer.

It is found in the cytoplasm. It catalyses the reaction L-citrulline + L-aspartate + ATP = 2-(N(omega)-L-arginino)succinate + AMP + diphosphate + H(+). Its pathway is amino-acid biosynthesis; L-arginine biosynthesis; L-arginine from L-ornithine and carbamoyl phosphate: step 2/3. The sequence is that of Argininosuccinate synthase from Ligilactobacillus salivarius (strain UCC118) (Lactobacillus salivarius).